A 72-amino-acid polypeptide reads, in one-letter code: Translation initiation factor IF-1 2 (72 aa).

The region spanning 1–72 is the S1-like domain; sequence MAKEDVIEMQ…TKGRIVFRTK (72 aa).

This sequence belongs to the IF-1 family. In terms of assembly, component of the 30S ribosomal translation pre-initiation complex which assembles on the 30S ribosome in the order IF-2 and IF-3, IF-1 and N-formylmethionyl-tRNA(fMet); mRNA recruitment can occur at any time during PIC assembly.

It localises to the cytoplasm. In terms of biological role, one of the essential components for the initiation of protein synthesis. Stabilizes the binding of IF-2 and IF-3 on the 30S subunit to which N-formylmethionyl-tRNA(fMet) subsequently binds. Helps modulate mRNA selection, yielding the 30S pre-initiation complex (PIC). Upon addition of the 50S ribosomal subunit IF-1, IF-2 and IF-3 are released leaving the mature 70S translation initiation complex. The chain is Translation initiation factor IF-1 2 from Azoarcus sp. (strain BH72).